The following is a 331-amino-acid chain: Phosphoenolpyruvate transferase (331 aa).

Residue Asp63 participates in 7,8-didemethyl-8-hydroxy-5-deazariboflavin binding.

Belongs to the CofD family. As to quaternary structure, homodimer. The cofactor is Mg(2+).

The enzyme catalyses enolpyruvoyl-2-diphospho-5'-guanosine + 7,8-didemethyl-8-hydroxy-5-deazariboflavin = dehydro coenzyme F420-0 + GMP + H(+). Its pathway is cofactor biosynthesis; coenzyme F420 biosynthesis. In terms of biological role, catalyzes the transfer of the phosphoenolpyruvate moiety from enoylpyruvoyl-2-diphospho-5'-guanosine (EPPG) to 7,8-didemethyl-8-hydroxy-5-deazariboflavin (FO) with the formation of dehydro coenzyme F420-0 and GMP. The protein is Phosphoenolpyruvate transferase of Mycobacterium sp. (strain JLS).